We begin with the raw amino-acid sequence, 78 residues long: UPF0335 protein RBE_1185 (78 aa).

The protein belongs to the UPF0335 family.

The sequence is that of UPF0335 protein RBE_1185 from Rickettsia bellii (strain RML369-C).